The sequence spans 702 residues: Pentatricopeptide repeat-containing protein At4g16390, chloroplastic (702 aa).

A chloroplast-targeting transit peptide spans 1–53 (MSFHHLCSSPSSLLHDPLPLCNLLSVYPKSTPRSFLSSYNPNSSHFHSRNLLQ). PPR repeat units follow at residues 174–208 (EVIL…GIKP), 209–243 (DNAT…GCEP), 244–278 (DNVT…KWRI), 279–313 (DAVT…GVKP), 314–348 (NLVI…GFTP), 349–383 (NWST…GLSL), 384–414 (TVIL…MKNC), 420–454 (DSWT…GFEP), and 455–489 (TLFV…GITP). Residues 603 to 688 (LHLKSLSLGA…WFLTTSVAAK (86 aa)) enclose the Smr domain.

Belongs to the PPR family. P subfamily. Expressed in leaves and flowers and at lower levels in stems and flower buds.

Its subcellular location is the plastid. The protein resides in the chloroplast. In terms of biological role, involved in chloroplast RNA processing. Can bind RNA. Involved in chloroplast development. Involved in chloroplast ribosomal RNA (rRNA) processing and/or translation. Required for FtsH-mediated chloroplast biogenesis. Involved in translation and accumulation of chloroplast ATP synthase subunits. This Arabidopsis thaliana (Mouse-ear cress) protein is Pentatricopeptide repeat-containing protein At4g16390, chloroplastic.